The primary structure comprises 457 residues: D-hydantoinase (457 aa).

The Zn(2+) site is built by His57 and His59. Position 69 is a phosphoserine (Ser69). Zn(2+) is bound at residue Lys148. Lys148 carries the post-translational modification N6-carboxylysine. A substrate-binding site is contributed by Tyr153. The Zn(2+) site is built by His181 and His237. Residue Thr286 coordinates substrate. Residue Asp313 participates in Zn(2+) binding. Position 335 (Asn335) interacts with substrate.

This sequence belongs to the metallo-dependent hydrolases superfamily. Hydantoinase/dihydropyrimidinase family. Homotetramer. The cofactor is Zn(2+). Post-translationally, carboxylation allows a single lysine to coordinate two zinc ions.

Its function is as follows. Catalyzes the stereospecific hydrolysis of the cyclic amide bond of D-hydantoin derivatives. In Rhizobium radiobacter (Agrobacterium tumefaciens), this protein is D-hydantoinase (hyuA).